We begin with the raw amino-acid sequence, 90 residues long: DNA-directed RNA polymerase subunit Rpo11 (90 aa).

It belongs to the archaeal Rpo11/eukaryotic RPB11/RPC19 RNA polymerase subunit family. In terms of assembly, part of the RNA polymerase complex.

It is found in the cytoplasm. The catalysed reaction is RNA(n) + a ribonucleoside 5'-triphosphate = RNA(n+1) + diphosphate. Its function is as follows. DNA-dependent RNA polymerase (RNAP) catalyzes the transcription of DNA into RNA using the four ribonucleoside triphosphates as substrates. In Metallosphaera sedula (strain ATCC 51363 / DSM 5348 / JCM 9185 / NBRC 15509 / TH2), this protein is DNA-directed RNA polymerase subunit Rpo11.